The primary structure comprises 915 residues: Isoleucine--tRNA ligase (915 aa).

A 'HIGH' region motif is present at residues 57–67 (PYANGNLHMGH). An L-isoleucyl-5'-AMP-binding site is contributed by E554. Positions 595–599 (KMSKS) match the 'KMSKS' region motif. K598 is an ATP binding site. Zn(2+) contacts are provided by C885, C888, C905, and C908.

It belongs to the class-I aminoacyl-tRNA synthetase family. IleS type 1 subfamily. In terms of assembly, monomer. Requires Zn(2+) as cofactor.

Its subcellular location is the cytoplasm. The enzyme catalyses tRNA(Ile) + L-isoleucine + ATP = L-isoleucyl-tRNA(Ile) + AMP + diphosphate. In terms of biological role, catalyzes the attachment of isoleucine to tRNA(Ile). As IleRS can inadvertently accommodate and process structurally similar amino acids such as valine, to avoid such errors it has two additional distinct tRNA(Ile)-dependent editing activities. One activity is designated as 'pretransfer' editing and involves the hydrolysis of activated Val-AMP. The other activity is designated 'posttransfer' editing and involves deacylation of mischarged Val-tRNA(Ile). This Staphylococcus carnosus (strain TM300) protein is Isoleucine--tRNA ligase.